The primary structure comprises 77 residues: MESIFNNSFATLVAYVGIVSIYLLVIPLILFYWMNNRWNVMGKFERLIVYGLVFLFFPGLILFSPFLNLRLRGDSKG.

Helical transmembrane passes span Leu-12–Tyr-32 and Leu-47–Leu-67.

The protein belongs to the complex I NdhL subunit family. In terms of assembly, NDH-1 can be composed of about 15 different subunits; different subcomplexes with different compositions have been identified which probably have different functions.

It localises to the cellular thylakoid membrane. It catalyses the reaction a plastoquinone + NADH + (n+1) H(+)(in) = a plastoquinol + NAD(+) + n H(+)(out). The enzyme catalyses a plastoquinone + NADPH + (n+1) H(+)(in) = a plastoquinol + NADP(+) + n H(+)(out). NDH-1 shuttles electrons from an unknown electron donor, via FMN and iron-sulfur (Fe-S) centers, to quinones in the respiratory and/or the photosynthetic chain. The immediate electron acceptor for the enzyme in this species is believed to be plastoquinone. Couples the redox reaction to proton translocation, and thus conserves the redox energy in a proton gradient. Cyanobacterial NDH-1 also plays a role in inorganic carbon-concentration. The polypeptide is NAD(P)H-quinone oxidoreductase subunit L (Prochlorococcus marinus subsp. pastoris (strain CCMP1986 / NIES-2087 / MED4)).